The following is a 130-amino-acid chain: Mini-ribonuclease 3 (130 aa).

Aspartate 19 is an active-site residue. The segment at 69 to 91 is disordered; that stretch reads EQDVVRRGRNAKGHGAPKSADPA.

The protein belongs to the MrnC RNase family. As to quaternary structure, homodimer. Mg(2+) serves as cofactor.

The protein localises to the cytoplasm. Functionally, involved in correct processing of both the 5' and 3' ends of 23S rRNA precursor. Processes 30S rRNA precursor transcript even in absence of ribonuclease 3 (Rnc); Rnc processes 30S rRNA into smaller rRNA precursors. The polypeptide is Mini-ribonuclease 3 (Symbiobacterium thermophilum (strain DSM 24528 / JCM 14929 / IAM 14863 / T)).